Reading from the N-terminus, the 422-residue chain is Probable alpha-1,6-mannosyltransferase MNN11 (422 aa).

The Cytoplasmic portion of the chain corresponds to 1–31; that stretch reads MAIKPRTKGKTYSSRSVGSQWFNRLGFKQNK. A helical; Signal-anchor for type II membrane protein transmembrane segment spans residues 32–52; sequence YGTCKFLSIITAFVFILYFFS. The Lumenal segment spans residues 53-422; the sequence is NRFYPISRSA…GHMYQKIKKS (370 aa).

The protein belongs to the glycosyltransferase 34 family. As to quaternary structure, component of the M-Pol II complex composed of ANP1, MNN9, MNN10, MNN11 and HOC1.

The protein localises to the golgi apparatus. Its subcellular location is the cis-Golgi network membrane. Functionally, required for synthesis of full-length mannan chains. The M-Pol II complex possesses alpha-1,6-mannosyltransferase activity and is probably involved in the elongation of the mannan backbone of N-linked glycans on cell wall and periplasmic proteins. This chain is Probable alpha-1,6-mannosyltransferase MNN11 (MNN11), found in Saccharomyces cerevisiae (strain ATCC 204508 / S288c) (Baker's yeast).